Consider the following 147-residue polypeptide: MEEINREEFQEVVVNIGRVTKVVKGGRRFRFNALVVVGNKNGLVGFGLGKAKEVPDAIKKAVDDAFKNLIHVTIKGTTIAHDIEHKYNASRILLKPASEGTGVIAGGSTRPIVELAGIKDILTKSLGSNNPYNVVRATFDALAKIKA.

The region spanning 9–72 (FQEVVVNIGR…DDAFKNLIHV (64 aa)) is the S5 DRBM domain.

This sequence belongs to the universal ribosomal protein uS5 family. As to quaternary structure, part of the 30S ribosomal subunit. Contacts proteins S4 and S8.

With S4 and S12 plays an important role in translational accuracy. Functionally, located at the back of the 30S subunit body where it stabilizes the conformation of the head with respect to the body. This chain is Small ribosomal subunit protein uS5, found in Helicobacter pylori (strain J99 / ATCC 700824) (Campylobacter pylori J99).